A 72-amino-acid polypeptide reads, in one-letter code: MSKEELLEFPGVVTELLPNATFRVKLENEHEIIAHTAGKMRKNRIRVLAGDKVLVEMTPYDLTKGRITYRFK.

An S1-like domain is found at 1–72 (MSKEELLEFP…TKGRITYRFK (72 aa)).

This sequence belongs to the IF-1 family. As to quaternary structure, component of the 30S ribosomal translation pre-initiation complex which assembles on the 30S ribosome in the order IF-2 and IF-3, IF-1 and N-formylmethionyl-tRNA(fMet); mRNA recruitment can occur at any time during PIC assembly.

The protein resides in the cytoplasm. Functionally, one of the essential components for the initiation of protein synthesis. Stabilizes the binding of IF-2 and IF-3 on the 30S subunit to which N-formylmethionyl-tRNA(fMet) subsequently binds. Helps modulate mRNA selection, yielding the 30S pre-initiation complex (PIC). Upon addition of the 50S ribosomal subunit IF-1, IF-2 and IF-3 are released leaving the mature 70S translation initiation complex. The polypeptide is Translation initiation factor IF-1 (Parvibaculum lavamentivorans (strain DS-1 / DSM 13023 / NCIMB 13966)).